The following is a 47-amino-acid chain: RVCMGKSQHHSFPCISDRLCSNECVKEEGGWTAGYCHLRYCRCQKAC.

Intrachain disulfides connect C3/C47, C14/C36, C20/C41, and C24/C43.

This sequence belongs to the DEFL family. Protease inhibitor I18 (RTI/MTI-2) subfamily.

This chain is Defensin-like protein 1, found in Sorghum bicolor (Sorghum).